Here is a 1193-residue protein sequence, read N- to C-terminus: Major DNA-binding protein (1193 aa).

Residues 827–828 (FW) carry the Required for filament formation motif. The segment at 1125 to 1145 (AGGGPAGSAGGPESGGGAGAA) is disordered. The required for nuclear localization stretch occupies residues 1170 to 1193 (PTAAALDGGGDGDECAFPAKRLRL).

This sequence belongs to the herpesviridae major DNA-binding protein family. In terms of assembly, homooligomers. Forms double-helical filaments necessary for the formation of replication compartments within the host nucleus. Interacts with the origin-binding protein. Interacts with the helicase primase complex; this interaction stimulates primer synthesis activity of the helicase-primase complex. Interacts with the DNA polymerase. Interacts with the alkaline exonuclease; this interaction increases its nuclease processivity.

The protein resides in the host nucleus. Plays several crucial roles in viral infection. Participates in the opening of the viral DNA origin to initiate replication by interacting with the origin-binding protein. May disrupt loops, hairpins and other secondary structures present on ssDNA to reduce and eliminate pausing of viral DNA polymerase at specific sites during elongation. Promotes viral DNA recombination by performing strand-transfer, characterized by the ability to transfer a DNA strand from a linear duplex to a complementary single-stranded DNA circle. Can also catalyze the renaturation of complementary single strands. Additionally, reorganizes the host cell nucleus, leading to the formation of prereplicative sites and replication compartments. This process is driven by the protein which can form double-helical filaments in the absence of DNA. The chain is Major DNA-binding protein from Tupaiid herpesvirus (strain 2) (TuHV-2).